A 183-amino-acid chain; its full sequence is Orotate phosphoribosyltransferase (183 aa).

Residues Arg100, Lys101, Lys104, His106, and 126 to 134 (EDVVTTGSS) each bind 5-phospho-alpha-D-ribose 1-diphosphate. The orotate site is built by Thr130 and Arg158.

Belongs to the purine/pyrimidine phosphoribosyltransferase family. PyrE subfamily. In terms of assembly, homodimer. It depends on Mg(2+) as a cofactor.

It carries out the reaction orotidine 5'-phosphate + diphosphate = orotate + 5-phospho-alpha-D-ribose 1-diphosphate. It participates in pyrimidine metabolism; UMP biosynthesis via de novo pathway; UMP from orotate: step 1/2. Functionally, catalyzes the transfer of a ribosyl phosphate group from 5-phosphoribose 1-diphosphate to orotate, leading to the formation of orotidine monophosphate (OMP). This Aquifex aeolicus (strain VF5) protein is Orotate phosphoribosyltransferase.